The primary structure comprises 280 residues: Putative pyruvate, phosphate dikinase regulatory protein (280 aa).

149–156 contacts ADP; sequence GVSRSSKT.

Belongs to the pyruvate, phosphate/water dikinase regulatory protein family. PDRP subfamily.

It carries out the reaction N(tele)-phospho-L-histidyl/L-threonyl-[pyruvate, phosphate dikinase] + ADP = N(tele)-phospho-L-histidyl/O-phospho-L-threonyl-[pyruvate, phosphate dikinase] + AMP + H(+). The enzyme catalyses N(tele)-phospho-L-histidyl/O-phospho-L-threonyl-[pyruvate, phosphate dikinase] + phosphate + H(+) = N(tele)-phospho-L-histidyl/L-threonyl-[pyruvate, phosphate dikinase] + diphosphate. In terms of biological role, bifunctional serine/threonine kinase and phosphorylase involved in the regulation of the pyruvate, phosphate dikinase (PPDK) by catalyzing its phosphorylation/dephosphorylation. This Novosphingobium aromaticivorans (strain ATCC 700278 / DSM 12444 / CCUG 56034 / CIP 105152 / NBRC 16084 / F199) protein is Putative pyruvate, phosphate dikinase regulatory protein.